The primary structure comprises 934 residues: Complement component C6 (934 aa).

The first 21 residues, 1 to 21, serve as a signal peptide directing secretion; sequence MARRSVLYFILLNALINKGQA. 11 disulfide bridges follow: Cys-22/Cys-61, Cys-24/Cys-65, Cys-35/Cys-73, Cys-39/Cys-78, Cys-82/Cys-117, Cys-93/Cys-127, Cys-96/Cys-133, Cys-140/Cys-151, Cys-146/Cys-164, Cys-158/Cys-173, and Cys-180/Cys-218. TSP type-1 domains lie at 22–79 and 81–134; these read CFCD…QRCP and NCLL…KLCK. A glycan (C-linked (Man) tryptophan) is linked at Trp-29. Trp-32 carries C-linked (Man) tryptophan; partial glycosylation. An O-linked (Fuc...) threonine glycan is attached at Thr-38. A glycan (C-linked (Man) tryptophan; partial) is linked at Trp-90. The LDL-receptor class A domain occupies 138–175; the sequence is ADCKNKFRCDSGRCIARKLECNGENDCGDNSDERDCGR. Residues Leu-156, Asn-159, Glu-161, Asp-163, Asp-169, and Glu-170 each coordinate Ca(2+). One can recognise an MACPF domain in the interval 176–522; the sequence is TKAVCTRKYN…EYAAKFDPCQ (347 aa). Residues 278–290 form a beta stranded membrane-spanning segment; sequence SFSVPIFYSSKRS. The N-linked (GlcNAc...) asparagine glycan is linked to Asn-324. The O-linked (Fuc...) threonine glycan is linked to Thr-392. 16 disulfide bridges follow: Cys-399-Cys-420, Cys-499-Cys-623, Cys-521-Cys-570, Cys-523-Cys-539, Cys-526-Cys-541, Cys-543-Cys-552, Cys-577-Cys-611, Cys-589-Cys-601, Cys-644-Cys-686, Cys-672-Cys-699, Cys-704-Cys-746, Cys-732-Cys-761, Cys-773-Cys-823, Cys-784-Cys-801, Cys-786-Cys-837, and Cys-793-Cys-816. The chain crosses the membrane as a beta stranded span at residues 402-415; that stretch reads IETKKRVLFAKKTK. The 31-residue stretch at 523 to 553 folds into the EGF-like domain; that stretch reads CAPCPNNGRPTLSGTECLCVCQSGTYGENCE. A TSP type-1 3 domain is found at 565-612; it reads DGQWGCWSSWSTCDATYKRSRTRECNNPAPQRGGKRCEGEKRQEEDCT. C-linked (Man) tryptophan; partial glycosylation is found at Trp-568, Trp-571, and Trp-574. CCP stretches follow at residues 611 to 688 and 689 to 765; these read CTFS…RCLP and DGTW…EKDT. 2 consecutive Sushi domains span residues 642–701 and 702–763; these read SGCP…ECQR and TECI…TCEK. The segment at 642-934 is C5b-binding domain; that stretch reads SGCPQPVPPE…EILHPGKCLA (293 aa). Residues 766–840 form a factor I module (FIM) 1 region; that stretch reads LTKLKGHCQL…FLHIGSCQDG (75 aa). Positions 780 to 839 constitute a Kazal-like 1 domain; the sequence is SGSECICMSPEEDCSHHSEDLCVFDTDSNDYFTSPACKFLAEKCLNNQQLHFLHIGSCQD. An N-linked (GlcNAc...) asparagine glycan is attached at Asn-855. The tract at residues 858–934 is factor I module (FIM) 2; sequence KKESCGYDTC…EILHPGKCLA (77 aa). Disulfide bonds link Cys-862/Cys-873, Cys-867/Cys-919, Cys-880/Cys-897, Cys-882/Cys-932, and Cys-888/Cys-912. A Kazal-like 2 domain is found at 876-934; that stretch reads STSKCVCLLPPQCFKGGNQLYCVKMGSSTSEKTLNICEVGTIRCANRKMEILHPGKCLA.

Belongs to the complement C6/C7/C8/C9 family. In terms of assembly, component of the membrane attack complex (MAC), composed of complement C5b, C6, C7, C8A, C8B, C8G and multiple copies of the pore-forming subunit C9. Post-translationally, all cysteine residues are assumed to be cross-linked to one another. Individual modules containing an even number of conserved cysteine residues are supposed to have disulfide linkages only within the same module.

The protein resides in the secreted. The protein localises to the target cell membrane. Its activity is regulated as follows. Membrane attack complex (MAC) assembly is inhibited by CD59, thereby protecting self-cells from damage during complement activation. MAC assembly is also inhibited by clusterin (CLU) chaperones that inhibit polymerization of C9. Functionally, component of the membrane attack complex (MAC), a multiprotein complex activated by the complement cascade, which inserts into a target cell membrane and forms a pore, leading to target cell membrane rupture and cell lysis. The MAC is initiated by proteolytic cleavage of C5 into complement C5b in response to the classical, alternative, lectin and GZMK complement pathways. The complement pathways consist in a cascade of proteins that leads to phagocytosis and breakdown of pathogens and signaling that strengthens the adaptive immune system. Together with component C5b, involved in MAC complex assembly: complement C5b and C6 associate with the outer leaflet of target cell membrane, reducing the energy for membrane bending. In Homo sapiens (Human), this protein is Complement component C6.